We begin with the raw amino-acid sequence, 179 residues long: Large ribosomal subunit protein uL6 (179 aa).

It belongs to the universal ribosomal protein uL6 family. Part of the 50S ribosomal subunit.

In terms of biological role, this protein binds to the 23S rRNA, and is important in its secondary structure. It is located near the subunit interface in the base of the L7/L12 stalk, and near the tRNA binding site of the peptidyltransferase center. This is Large ribosomal subunit protein uL6 from Geobacter metallireducens (strain ATCC 53774 / DSM 7210 / GS-15).